A 588-amino-acid polypeptide reads, in one-letter code: Proline--tRNA ligase (588 aa).

It belongs to the class-II aminoacyl-tRNA synthetase family. ProS type 1 subfamily. In terms of assembly, homodimer.

It localises to the cytoplasm. The enzyme catalyses tRNA(Pro) + L-proline + ATP = L-prolyl-tRNA(Pro) + AMP + diphosphate. Catalyzes the attachment of proline to tRNA(Pro) in a two-step reaction: proline is first activated by ATP to form Pro-AMP and then transferred to the acceptor end of tRNA(Pro). As ProRS can inadvertently accommodate and process non-cognate amino acids such as alanine and cysteine, to avoid such errors it has two additional distinct editing activities against alanine. One activity is designated as 'pretransfer' editing and involves the tRNA(Pro)-independent hydrolysis of activated Ala-AMP. The other activity is designated 'posttransfer' editing and involves deacylation of mischarged Ala-tRNA(Pro). The misacylated Cys-tRNA(Pro) is not edited by ProRS. The chain is Proline--tRNA ligase from Corynebacterium glutamicum (strain ATCC 13032 / DSM 20300 / JCM 1318 / BCRC 11384 / CCUG 27702 / LMG 3730 / NBRC 12168 / NCIMB 10025 / NRRL B-2784 / 534).